The primary structure comprises 573 residues: MGVSAVLKRARNLLATFIVCCFMAVVLVLALAHHFINEHRDTRSSSTQIEVDDESKRNVHHDHVLTRTNAYATPYLDLEHDKKNGIVYDHTRTVVRKKNHEVGSSSLHKNLFHKFLTKLIFRFIEKEKVTEGVTQGKFNNSSNEIANHEPVFEKIPVQCDNPLQNLILSEDLTLVADLNYYFNQYNIQIEEFRLETEDGFVIDLWHLIPKYRTTDSDKKKRPPILMLHGLLQSSGSFASNGRKSLAYFLYQSGYDIWLGNNRCGFRPEWNEAKVPTLASRWDWDLREMVKYDLTLLIDTVLAKTQFEKLTLISHSQGTTQGFMGLVNEDKFFPPGSGSKESFFTSKIANYIALAPAVYPGPLLNEKLFVKLMTKEIENPWFFGETSFFEIMMIVRNLCVGESLFSFVCYTIFNYLFDWNDTLWDTALRDRHFLFSPVHVSVKLMQWWLSPDPNKVSFKFGSHKMFPDNVKWFSDASKAPNIYLFVPKQDRLVDGERLINHFVNVESNVNYKIWYIDEYAHIDVLWAHDVIERIGKPILQNLNNYYSKKPSSAFESDCSDTEVETELEMVAEKA.

The Cytoplasmic segment spans residues 1–12; the sequence is MGVSAVLKRARN. An intramembrane segment occupies 13 to 33; it reads LLATFIVCCFMAVVLVLALAH. The Cytoplasmic segment spans residues 34-573; that stretch reads HFINEHRDTR…TELEMVAEKA (540 aa). Catalysis depends on Ser315, which acts as the Nucleophile. Catalysis depends on charge relay system residues Asp489 and His520.

The protein belongs to the AB hydrolase superfamily. Not N-glycosylated.

It is found in the lipid droplet. It localises to the membrane. It carries out the reaction a sterol ester + H2O = a sterol + a fatty acid + H(+). Its function is as follows. Mediates the hydrolysis of steryl esters, thereby playing a central role in lipid metabolism. Under heme-deficient conditions, it constitutes the major steryl ester hydrolase, suggesting that it plays a central role in mobilization of steryl esters under anaerobic conditions. This is Sterol esterase 1 (YEH1) from Saccharomyces cerevisiae (strain ATCC 204508 / S288c) (Baker's yeast).